Consider the following 273-residue polypeptide: Diaminopimelate epimerase (273 aa).

The substrate site is built by asparagine 11 and asparagine 60. The active-site Proton donor is cysteine 69. Residues glycine 70–asparagine 71, asparagine 181, and glutamate 199–arginine 200 each bind substrate. Cysteine 209 acts as the Proton acceptor in catalysis. Glycine 210 to threonine 211 is a binding site for substrate.

Belongs to the diaminopimelate epimerase family. As to quaternary structure, homodimer.

It is found in the cytoplasm. It carries out the reaction (2S,6S)-2,6-diaminopimelate = meso-2,6-diaminopimelate. It functions in the pathway amino-acid biosynthesis; L-lysine biosynthesis via DAP pathway; DL-2,6-diaminopimelate from LL-2,6-diaminopimelate: step 1/1. Its function is as follows. Catalyzes the stereoinversion of LL-2,6-diaminopimelate (L,L-DAP) to meso-diaminopimelate (meso-DAP), a precursor of L-lysine and an essential component of the bacterial peptidoglycan. The sequence is that of Diaminopimelate epimerase from Helicobacter pylori (strain HPAG1).